Reading from the N-terminus, the 265-residue chain is Phosphate import ATP-binding protein PstB 2 (265 aa).

In terms of domain architecture, ABC transporter spans 13 to 260 (FRTENLNVYY…PTKQATRDYV (248 aa)). An ATP-binding site is contributed by 45-52 (GPSGCGKS).

Belongs to the ABC transporter superfamily. Phosphate importer (TC 3.A.1.7) family. As to quaternary structure, the complex is composed of two ATP-binding proteins (PstB), two transmembrane proteins (PstC and PstA) and a solute-binding protein (PstS).

It is found in the cell inner membrane. The enzyme catalyses phosphate(out) + ATP + H2O = ADP + 2 phosphate(in) + H(+). Functionally, part of the ABC transporter complex PstSACB involved in phosphate import. Responsible for energy coupling to the transport system. The chain is Phosphate import ATP-binding protein PstB 2 from Synechococcus sp. (strain JA-3-3Ab) (Cyanobacteria bacterium Yellowstone A-Prime).